The following is a 337-amino-acid chain: Cytoskeleton protein RodZ (337 aa).

Over 1–111 (MNTEATHDQN…LGKRRKKRDG (111 aa)) the chain is Cytoplasmic. One can recognise an HTH cro/C1-type domain in the interval 19–71 (LRNAREQLGLSQQAVAERLCLKVSTVRDIEEDKAPADLASTFLRGYIRSYARL). Positions 30-49 (QQAVAERLCLKVSTVRDIEE) form a DNA-binding region, H-T-H motif. Residues 112–132 (WLMTFTWLVLFVVIGLSGAWW) traverse the membrane as a helical; Signal-anchor for type II membrane protein segment. The Periplasmic segment spans residues 133–337 (WQDHKAQQEE…TLNAEQSPAQ (205 aa)). Residues 145-167 (TMADQSSAELSSNSEQGQSVPLN) are compositionally biased toward polar residues. Positions 145–220 (TMADQSSAEL…VSPSQANVDT (76 aa)) are disordered. A compositionally biased stretch (low complexity) spans 168 to 207 (TSTTTDPATTSTPPASVDTTATNTQTPAVTAPAPAVDPQQ). Residues 208–218 (NAVVSPSQANV) are compositionally biased toward polar residues.

Belongs to the RodZ family.

Its subcellular location is the cell inner membrane. In terms of biological role, cytoskeletal protein that is involved in cell-shape control through regulation of the length of the long axis. The protein is Cytoskeleton protein RodZ of Escherichia coli O17:K52:H18 (strain UMN026 / ExPEC).